The primary structure comprises 359 residues: Phospho-N-acetylmuramoyl-pentapeptide-transferase (359 aa).

Helical transmembrane passes span 3–23, 55–75, 80–100, 117–137, 156–176, 187–207, 231–251, 255–275, 280–300, and 334–354; these read QILVAVTVALVVSILLTPALI, VAIVAGIWAGYLGTHLAGLAF, VSASGVLVLGLATALGGVGFL, TAKTVGQITAAVLFGVLVLQF, IATVTLAPALFVLFCMVIVSA, LDGLAAGSMAMVTAAYVLITF, LTLIAAATVGACIGFLWWNAA, IFMGDTGSLALGGVIAGLSVT, ILAVVLGSLFVAEITSVVLQI, and FWLLTAIACGLGVVLFYGEWL.

This sequence belongs to the glycosyltransferase 4 family. MraY subfamily. Requires Mg(2+) as cofactor.

The protein localises to the cell membrane. The enzyme catalyses UDP-N-acetyl-alpha-D-muramoyl-L-alanyl-gamma-D-glutamyl-meso-2,6-diaminopimeloyl-D-alanyl-D-alanine + di-trans,octa-cis-undecaprenyl phosphate = di-trans,octa-cis-undecaprenyl diphospho-N-acetyl-alpha-D-muramoyl-L-alanyl-D-glutamyl-meso-2,6-diaminopimeloyl-D-alanyl-D-alanine + UMP. Its pathway is cell wall biogenesis; peptidoglycan biosynthesis. Catalyzes the initial step of the lipid cycle reactions in the biosynthesis of the cell wall peptidoglycan: transfers peptidoglycan precursor phospho-MurNAc-pentapeptide from UDP-MurNAc-pentapeptide onto the lipid carrier undecaprenyl phosphate, yielding undecaprenyl-pyrophosphoryl-MurNAc-pentapeptide, known as lipid I. This chain is Phospho-N-acetylmuramoyl-pentapeptide-transferase, found in Mycobacterium leprae (strain TN).